The sequence spans 277 residues: General transcription factor IIF subunit 2 (277 aa).

The protein belongs to the TFIIF beta subunit family. In terms of assembly, heterodimer of an alpha and a beta subunit.

The protein localises to the nucleus. TFIIF is a general transcription initiation factor that binds to RNA polymerase II and helps to recruit it to the initiation complex in collaboration with TFIIB. In Drosophila melanogaster (Fruit fly), this protein is General transcription factor IIF subunit 2 (TfIIFbeta).